A 74-amino-acid polypeptide reads, in one-letter code: Sec-independent protein translocase protein TatA (74 aa).

A helical transmembrane segment spans residues 1–21; sequence MGSIGMTELLLIFGIIVLLFG.

It belongs to the TatA/E family. In terms of assembly, forms a complex with TatC.

The protein localises to the cell inner membrane. Functionally, part of the twin-arginine translocation (Tat) system that transports large folded proteins containing a characteristic twin-arginine motif in their signal peptide across membranes. TatA could form the protein-conducting channel of the Tat system. The protein is Sec-independent protein translocase protein TatA of Sulfurihydrogenibium sp. (strain YO3AOP1).